A 129-amino-acid polypeptide reads, in one-letter code: MDKKAIFDSVSNMEEQIGELYQQLGDLKTNLGEMLEENNRLNLENEHLRRRLSLTDEGTLEPVAEEEAVHGVMAPNRKEAMQQMIELGEGYDNLVQLYKEGFHVCNVHFGSPRGNDEDCLFCLSLLNKK.

Positions 103, 105, 119, and 122 each coordinate Zn(2+).

The protein belongs to the YabA family. In terms of assembly, homotetramer. Interacts with both DnaA and DnaN, acting as a bridge between these two proteins. It depends on Zn(2+) as a cofactor.

It is found in the cytoplasm. The protein localises to the nucleoid. Its function is as follows. Involved in control of chromosome replication initiation. Inhibits the cooperative binding of DnaA to the oriC region, thus negatively regulating initiation of chromosome replication. Inhibits the ability of DnaA-ATP to form a helix on DNA; does not disassemble preformed DnaA-DNA helices. Decreases the residence time of DnaA on the chromosome at its binding sites (oriC, replication forks and promoter-binding sites). Tethers DnaA to the replication machinery via the DNA polymerase beta sliding clamp subunit (dnaN). Associates with oriC and other DnaA targets on the chromosome in a DnaA-dependent manner. In Listeria welshimeri serovar 6b (strain ATCC 35897 / DSM 20650 / CCUG 15529 / CIP 8149 / NCTC 11857 / SLCC 5334 / V8), this protein is Replication initiation control protein YabA.